We begin with the raw amino-acid sequence, 512 residues long: Cytochrome P450 monooxygenase TwmD (512 aa).

Residue Cys454 coordinates heme.

This sequence belongs to the cytochrome P450 family. Requires heme as cofactor.

It functions in the pathway secondary metabolite biosynthesis. In terms of biological role, cytochrome P450 monooxygenase; part of the gene cluster that mediates the biosynthesis of wortmanamides A and B, reduced long-chain polyketides amidated with a specific omega-amino acid, 5-aminopentanoic acid (5PA). The PKS modules of TwmB are involved in the synthesis of the polyketide backbone, whereas the non-canonical C domain of TwmB is a bonafide condensation domain that specifically selects 5PA and catalyzes amidation to release polyketide chain. The C domain clearly prefers C16 and C18 fatty acyl substrates, which is consistent with simultaneous formation of both octaketide and nonaketide acyl amides wortmanamides A and B. Because TwmB lacks a designated enoylreductase (ER) domain, the required activity is provided the enoyl reductase TwmE. The roles of the remaining enzymes have still to be clarified. This chain is Cytochrome P450 monooxygenase TwmD, found in Talaromyces wortmannii (Penicillium wortmannii).